We begin with the raw amino-acid sequence, 58 residues long: Protein translocase subunit SecE (58 aa).

The helical transmembrane segment at 36–56 (ILLIGFIGFLMFAIMSLLPGV) threads the bilayer.

The protein belongs to the SecE/SEC61-gamma family. As to quaternary structure, component of the Sec protein translocase complex. Heterotrimer consisting of SecY (alpha), SecG (beta) and SecE (gamma) subunits. The heterotrimers can form oligomers, although 1 heterotrimer is thought to be able to translocate proteins. Interacts with the ribosome. May interact with SecDF, and other proteins may be involved.

Its subcellular location is the cell membrane. Its function is as follows. Essential subunit of the Sec protein translocation channel SecYEG. Clamps together the 2 halves of SecY. May contact the channel plug during translocation. The chain is Protein translocase subunit SecE from Halorubrum lacusprofundi (strain ATCC 49239 / DSM 5036 / JCM 8891 / ACAM 34).